Consider the following 401-residue polypeptide: MRRRLRLRREALLTLLLGATLGLLLYAQQEGAAPTTSAPRAQGRAAPGPTPGLRVFQAPDTGAAPPAYEGDTPEPPTPTGPFDFGRYLRAKDQRRFPLLINQPHKCQGNGAFPRGPDLLIAVKSVAADFERRQAVRQTWGAEGRVQGALVRRVFLLGVPRGTGTVAGEAEAGTQTHWSALLRAESRAYADILLWAFDDTFFNLTLKEIHFLAWASDYCPDVRFVFKGDADVFVHVGNLLEFLAPRDPAQDLLAGDVIVQARPIRVRASKYYIPEAVYGLPAYPAYAGGGGFVLSGATLRRLAGACAQVELFPIDDVFLGMCLQRLRLTPEPHPAFRTFGIPRPSAAPHLHTFDPCFYRELVVVHGLSAADIWLMWHLLHGPNGPACARPWPVPAGPFQWGP.

Topologically, residues 1-10 are cytoplasmic; that stretch reads MRRRLRLRRE. The helical; Signal-anchor for type II membrane protein transmembrane segment at 11-31 threads the bilayer; the sequence is ALLTLLLGATLGLLLYAQQEG. The Lumenal segment spans residues 32–401; sequence AAPTTSAPRA…VPAGPFQWGP (370 aa). Residues 33-85 form a disordered region; the sequence is APTTSAPRAQGRAAPGPTPGLRVFQAPDTGAAPPAYEGDTPEPPTPTGPFDFG. Residues 38–47 show a composition bias toward low complexity; sequence APRAQGRAAP.

Belongs to the glycosyltransferase 31 family.

Its subcellular location is the golgi apparatus membrane. The sequence is that of UDP-GlcNAc:betaGal beta-1,3-N-acetylglucosaminyltransferase 9 from Bos taurus (Bovine).